A 100-amino-acid chain; its full sequence is Integration host factor subunit alpha (100 aa).

A disordered region spans residues 50-70 (GNFQLRDKPQRPGRNPKTGEE).

It belongs to the bacterial histone-like protein family. In terms of assembly, heterodimer of an alpha and a beta chain.

Functionally, this protein is one of the two subunits of integration host factor, a specific DNA-binding protein that functions in genetic recombination as well as in transcriptional and translational control. This Chromobacterium violaceum (strain ATCC 12472 / DSM 30191 / JCM 1249 / CCUG 213 / NBRC 12614 / NCIMB 9131 / NCTC 9757 / MK) protein is Integration host factor subunit alpha.